Reading from the N-terminus, the 374-residue chain is Methylthioribose-1-phosphate isomerase (374 aa).

D251 functions as the Proton donor in the catalytic mechanism.

The protein belongs to the eIF-2B alpha/beta/delta subunits family. MtnA subfamily.

Its subcellular location is the cytoplasm. It localises to the nucleus. It catalyses the reaction 5-(methylsulfanyl)-alpha-D-ribose 1-phosphate = 5-(methylsulfanyl)-D-ribulose 1-phosphate. It functions in the pathway amino-acid biosynthesis; L-methionine biosynthesis via salvage pathway; L-methionine from S-methyl-5-thio-alpha-D-ribose 1-phosphate: step 1/6. Its function is as follows. Catalyzes the interconversion of methylthioribose-1-phosphate (MTR-1-P) into methylthioribulose-1-phosphate (MTRu-1-P). The polypeptide is Methylthioribose-1-phosphate isomerase (Oryza sativa subsp. indica (Rice)).